A 478-amino-acid polypeptide reads, in one-letter code: Catalase (478 aa).

The segment at 1–23 is disordered; the sequence is MTNQLTTNEGQPWADNQHSQTAG. Residues histidine 53 and asparagine 126 contribute to the active site. Residue tyrosine 336 coordinates heme.

Belongs to the catalase family. It depends on heme as a cofactor.

Its subcellular location is the cytoplasm. The catalysed reaction is 2 H2O2 = O2 + 2 H2O. Functionally, decomposes hydrogen peroxide into water and oxygen; serves to protect cells from the toxic effects of hydrogen peroxide. This chain is Catalase (katA), found in Latilactobacillus sakei (Lactobacillus sakei).